The chain runs to 274 residues: 2,3,4,5-tetrahydropyridine-2,6-dicarboxylate N-succinyltransferase (274 aa).

Residues arginine 103 and aspartate 140 each coordinate substrate.

The protein belongs to the transferase hexapeptide repeat family. As to quaternary structure, homotrimer.

The protein localises to the cytoplasm. It carries out the reaction (S)-2,3,4,5-tetrahydrodipicolinate + succinyl-CoA + H2O = (S)-2-succinylamino-6-oxoheptanedioate + CoA. Its pathway is amino-acid biosynthesis; L-lysine biosynthesis via DAP pathway; LL-2,6-diaminopimelate from (S)-tetrahydrodipicolinate (succinylase route): step 1/3. The protein is 2,3,4,5-tetrahydropyridine-2,6-dicarboxylate N-succinyltransferase of Actinobacillus pleuropneumoniae serotype 5b (strain L20).